A 138-amino-acid polypeptide reads, in one-letter code: Transcription antitermination protein NusB (138 aa).

It belongs to the NusB family.

Its function is as follows. Involved in transcription antitermination. Required for transcription of ribosomal RNA (rRNA) genes. Binds specifically to the boxA antiterminator sequence of the ribosomal RNA (rrn) operons. In Yersinia enterocolitica serotype O:8 / biotype 1B (strain NCTC 13174 / 8081), this protein is Transcription antitermination protein NusB.